Reading from the N-terminus, the 357-residue chain is 3-dehydroquinate synthase (357 aa).

Residues 104-108 (GVVGD), 128-129 (TT), lysine 141, and 168-171 (FLET) contribute to the NAD(+) site. Residues glutamate 183, histidine 243, and histidine 260 each contribute to the Zn(2+) site.

This sequence belongs to the sugar phosphate cyclases superfamily. Dehydroquinate synthase family. It depends on NAD(+) as a cofactor. Requires Co(2+) as cofactor. The cofactor is Zn(2+).

Its subcellular location is the cytoplasm. The enzyme catalyses 7-phospho-2-dehydro-3-deoxy-D-arabino-heptonate = 3-dehydroquinate + phosphate. It participates in metabolic intermediate biosynthesis; chorismate biosynthesis; chorismate from D-erythrose 4-phosphate and phosphoenolpyruvate: step 2/7. In terms of biological role, catalyzes the conversion of 3-deoxy-D-arabino-heptulosonate 7-phosphate (DAHP) to dehydroquinate (DHQ). In Streptococcus pyogenes serotype M18 (strain MGAS8232), this protein is 3-dehydroquinate synthase.